We begin with the raw amino-acid sequence, 66 residues long: Large ribosomal subunit protein eL24 (66 aa).

4 residues coordinate Zn(2+): C6, C9, C32, and C36. The C4-type zinc-finger motif lies at C6 to C36.

The protein belongs to the eukaryotic ribosomal protein eL24 family. Part of the 50S ribosomal subunit. Forms a cluster with proteins L3 and L14. The cofactor is Zn(2+).

Binds to the 23S rRNA. The sequence is that of Large ribosomal subunit protein eL24 from Picrophilus torridus (strain ATCC 700027 / DSM 9790 / JCM 10055 / NBRC 100828 / KAW 2/3).